Here is a 65-residue protein sequence, read N- to C-terminus: Photosystem II reaction center protein J (65 aa).

The helical transmembrane segment at 35-55 (LWLVATAGGTAVIFVLGIFFY) threads the bilayer.

This sequence belongs to the PsbJ family. In terms of assembly, PSII is composed of 1 copy each of membrane proteins PsbA, PsbB, PsbC, PsbD, PsbE, PsbF, PsbH, PsbI, PsbJ, PsbK, PsbL, PsbM, PsbT, PsbX, PsbY, Psb30/Ycf12, peripheral proteins PsbO, CyanoQ (PsbQ), PsbU, PsbV and a large number of cofactors. It forms dimeric complexes.

It localises to the cellular thylakoid membrane. In terms of biological role, one of the components of the core complex of photosystem II (PSII). PSII is a light-driven water:plastoquinone oxidoreductase that uses light energy to abstract electrons from H(2)O, generating O(2) and a proton gradient subsequently used for ATP formation. It consists of a core antenna complex that captures photons, and an electron transfer chain that converts photonic excitation into a charge separation. This chain is Photosystem II reaction center protein J, found in Prochlorococcus marinus (strain NATL2A).